We begin with the raw amino-acid sequence, 37 residues long: Large ribosomal subunit protein bL36c (37 aa).

It belongs to the bacterial ribosomal protein bL36 family.

The protein localises to the plastid. Its subcellular location is the chloroplast. The chain is Large ribosomal subunit protein bL36c (rpl36) from Porphyra purpurea (Red seaweed).